A 318-amino-acid chain; its full sequence is Petal death protein (318 aa).

Residues 1 to 3 (MAP) constitute a propeptide, removed in mature form. A disordered region spans residues 1 to 24 (MAPPNGTTNGETEVATQGSYTAVS). Mg(2+) contacts are provided by Asp-107, Asp-109, and Lys-142.

This sequence belongs to the isocitrate lyase/PEP mutase superfamily. As to quaternary structure, homodimer and homotetramer formed by a dimer of homodimer. Mg(2+) is required as a cofactor. It depends on Mn(2+) as a cofactor. Requires Fe(2+) as cofactor. The cofactor is Co(2+). In terms of tissue distribution, accumulates in senescing flower petals.

The catalysed reaction is oxaloacetate + H2O = oxalate + acetate + H(+). In terms of biological role, catalyzes cleavage of the C(2)-C(3) bond in oxaloacetate and in (2R)-alkyl malate derivatives to form oxalate and acetate, and alkyl carboxylates and R-ketocarboxylates, respectively. The protein is Petal death protein of Dianthus caryophyllus (Carnation).